We begin with the raw amino-acid sequence, 501 residues long: Glutamate--tRNA ligase (501 aa).

Positions 11 to 21 match the 'HIGH' region motif; the sequence is PSPTGPLHIGG. The short motif at 260-264 is the 'KMSKS' region element; that stretch reads KLSKR. Residue K263 participates in ATP binding.

Belongs to the class-I aminoacyl-tRNA synthetase family. Glutamate--tRNA ligase type 1 subfamily. As to quaternary structure, monomer.

The protein resides in the cytoplasm. The catalysed reaction is tRNA(Glu) + L-glutamate + ATP = L-glutamyl-tRNA(Glu) + AMP + diphosphate. Its function is as follows. Catalyzes the attachment of glutamate to tRNA(Glu) in a two-step reaction: glutamate is first activated by ATP to form Glu-AMP and then transferred to the acceptor end of tRNA(Glu). This is Glutamate--tRNA ligase from Flavobacterium johnsoniae (strain ATCC 17061 / DSM 2064 / JCM 8514 / BCRC 14874 / CCUG 350202 / NBRC 14942 / NCIMB 11054 / UW101) (Cytophaga johnsonae).